The chain runs to 275 residues: Nitrogenase iron protein 1 (275 aa).

9-16 lines the ATP pocket; it reads GKGGIGKS. C97 contributes to the [4Fe-4S] cluster binding site. ADP-ribosylarginine; by dinitrogenase reductase ADP-ribosyltransferase is present on R100. A [4Fe-4S] cluster-binding site is contributed by C132.

It belongs to the NifH/BchL/ChlL family. Homodimer. The cofactor is [4Fe-4S] cluster. In terms of processing, the reversible ADP-ribosylation of Arg-100 inactivates the nitrogenase reductase and regulates nitrogenase activity.

It catalyses the reaction N2 + 8 reduced [2Fe-2S]-[ferredoxin] + 16 ATP + 16 H2O = H2 + 8 oxidized [2Fe-2S]-[ferredoxin] + 2 NH4(+) + 16 ADP + 16 phosphate + 6 H(+). In terms of biological role, the key enzymatic reactions in nitrogen fixation are catalyzed by the nitrogenase complex, which has 2 components: the iron protein and the molybdenum-iron protein. In Methanothermobacter marburgensis (strain ATCC BAA-927 / DSM 2133 / JCM 14651 / NBRC 100331 / OCM 82 / Marburg) (Methanobacterium thermoautotrophicum), this protein is Nitrogenase iron protein 1 (nifH1).